The chain runs to 999 residues: Receptor-like protein kinase 5 (999 aa).

An N-terminal signal peptide occupies residues Met1–Thr14. Over Tyr15 to Asn621 the chain is Extracellular. LRR repeat units lie at residues Ser90 to Thr112, Asn115 to Asn137, Asn140 to Glu161, Lys164 to Val186, and Thr188 to Leu208. Residues Asn98 and Asn102 are each glycosylated (N-linked (GlcNAc...) asparagine). Asn150 and Asn185 each carry an N-linked (GlcNAc...) asparagine glycan. A glycan (N-linked (GlcNAc...) asparagine) is linked at Asn210. LRR repeat units follow at residues Glu213–Thr236 and Ser237–Leu259. Asn269 and Asn282 each carry an N-linked (GlcNAc...) asparagine glycan. LRR repeat units lie at residues Thr285–Leu307, Asn308–Ser330, Thr332–Ala353, Pro356–Glu378, Lys380–Cys402, Ser404–Pro427, Arg428–Ala450, Asn452–Leu474, Gln500–Lys523, Asn524–Leu546, Val548–Asn569, and Lys571–Lys593. A glycan (N-linked (GlcNAc...) asparagine) is linked at Asn452. A glycan (N-linked (GlcNAc...) asparagine) is linked at Asn576. Residues Ile622 to Val641 form a helical membrane-spanning segment. Residues Gly642–Val999 are Cytoplasmic-facing. In terms of domain architecture, Protein kinase spans Leu683–Ser968. ATP-binding positions include Ile689 to Val697 and Lys711. A phosphotyrosine mark is found at Tyr766 and Tyr806. Asp819 functions as the Proton acceptor in the catalytic mechanism. Phosphoserine is present on Ser856. Phosphotyrosine occurs at positions 864 and 871. Residue Thr872 is modified to Phosphothreonine. The disordered stretch occupies residues Pro972 to Val999.

It belongs to the protein kinase superfamily. Ser/Thr protein kinase family. As to quaternary structure, interacts with CST. Binds to IDA. The cofactor is Mg(2+). Requires Mn(2+) as cofactor. Autophosphorylated on Ser, Thr and Tyr residues. In terms of tissue distribution, expressed in roots and rosettes. Expressed at the base of petioles and pedicels, and in the abscission zones of the floral organs.

Its subcellular location is the cell membrane. It catalyses the reaction L-seryl-[protein] + ATP = O-phospho-L-seryl-[protein] + ADP + H(+). The catalysed reaction is L-threonyl-[protein] + ATP = O-phospho-L-threonyl-[protein] + ADP + H(+). The enzyme catalyses L-tyrosyl-[protein] + ATP = O-phospho-L-tyrosyl-[protein] + ADP + H(+). Receptor with a dual specificity kinase activity acting on both serine/threonine- and tyrosine-containing substrates that controls floral organ abscission. May interact with the 'INFLORESCENCE DEFICIENT IN ABSCISSION' (IDA) ligands family. The sequence is that of Receptor-like protein kinase 5 (RLK5) from Arabidopsis thaliana (Mouse-ear cress).